The primary structure comprises 171 residues: Large ribosomal subunit protein bL9 (171 aa).

Belongs to the bacterial ribosomal protein bL9 family.

Binds to the 23S rRNA. The sequence is that of Large ribosomal subunit protein bL9 from Rickettsia africae (strain ESF-5).